A 139-amino-acid chain; its full sequence is MRAQAAFPKAARLLKTDEFSSVFRLRPWRRTAHFVVYGRPTGNEARLGLVIGKKYAPRAATRNLVRRIAREAFRLRRAEFGGWDVLLRLHTRFDKKALPSASSPPLRALCRSEIEALLDKAAREVTRREAPPAEAPKTE.

The protein belongs to the RnpA family. Consists of a catalytic RNA component (M1 or rnpB) and a protein subunit.

The enzyme catalyses Endonucleolytic cleavage of RNA, removing 5'-extranucleotides from tRNA precursor.. Its function is as follows. RNaseP catalyzes the removal of the 5'-leader sequence from pre-tRNA to produce the mature 5'-terminus. It can also cleave other RNA substrates such as 4.5S RNA. The protein component plays an auxiliary but essential role in vivo by binding to the 5'-leader sequence and broadening the substrate specificity of the ribozyme. This chain is Ribonuclease P protein component, found in Paraburkholderia xenovorans (strain LB400).